We begin with the raw amino-acid sequence, 1497 residues long: Dual oxidase 1 (1497 aa).

Positions 1–21 are cleaved as a signal peptide; the sequence is MRSKHVLYIAILFSSIFGGKG. The Extracellular segment spans residues 22–587; sequence IQQNEEFQRY…MQSTYWTDND (566 aa). Positions 26–590 are peroxidase-like; mediates peroxidase activity; that stretch reads EEFQRYDGWY…TYWTDNDTTY (565 aa). Residues Asn66, Asn305, Asn567, and Asn586 are each glycosylated (N-linked (GlcNAc...) asparagine). Residues 588-608 traverse the membrane as a helical segment; that stretch reads TTYVFTLIGLACVPLICYGIG. The Cytoplasmic segment spans residues 609–986; it reads RYLVNRRIAI…VSAFLETYRQ (378 aa). EF-hand domains lie at 817 to 852 and 853 to 888; these read ANNE…FVNA and PQKQ…LNQT. The chain crosses the membrane as a helical span at residues 987-1007; it reads HVFIVFCFVAINLVLFFERFW. The Extracellular portion of the chain corresponds to 1008 to 1024; that stretch reads HYRYMAENRDLRRVMGA. A helical transmembrane segment spans residues 1025 to 1045; that stretch reads GIAITRGAAGALSFCMALILL. The 181-residue stretch at 1030-1210 folds into the Ferric oxidoreductase domain; the sequence is RGAAGALSFC…FVIDRIIGLM (181 aa). At 1046-1068 the chain is on the cytoplasmic side; the sequence is TVCRNIITLLRETVIAQYIPFDS. A helical transmembrane segment spans residues 1069-1089; it reads AIAFHKIVALFAAFWATLHTV. Topologically, residues 1090 to 1134 are extracellular; that stretch reads GHCVNFYHVGTQSQEGLACLFQEAFFGSNFLPSISYWFFSTITGL. A helical membrane pass occupies residues 1135–1155; that stretch reads TGIALVAVMCIIYVFALPCFI. The Cytoplasmic segment spans residues 1156–1163; that stretch reads KRAYHAFR. A helical membrane pass occupies residues 1164 to 1184; that stretch reads LTHLLNIAFYALTLLHGLPKL. Residues 1185 to 1189 lie on the Extracellular side of the membrane; that stretch reads LDSPK. A helical transmembrane segment spans residues 1190–1210; it reads FGYYVVGPIVLFVIDRIIGLM. In terms of domain architecture, FAD-binding FR-type spans 1211 to 1318; sequence QYYKKLEIVN…KGPYGDGNQE (108 aa). Residues 1211–1497 are Cytoplasmic-facing; that stretch reads QYYKKLEIVN…PSFAHRFETF (287 aa).

The protein in the N-terminal section; belongs to the peroxidase family. As to quaternary structure, interacts with doxa-1 and tsp-15. Interacts with rho-1. As to expression, expressed in hypodermal cells.

Its subcellular location is the membrane. It carries out the reaction NADH + O2 + H(+) = H2O2 + NAD(+). The catalysed reaction is NADPH + O2 + H(+) = H2O2 + NADP(+). Its activity is regulated as follows. Peroxidase activity is inhibited by aminobenzohydrazide. In terms of biological role, plays a role in cuticle biogenesis. In complex with doxa-1 and tsp-15, produces reactive oxygen species (ROS), which are probably used by mlt-7 for tyrosine cross-linking, thus stabilizing cuticular extracellular matrix. May regulate the production of ROS by playing a role in modulating proline catabolism. Required in combination with mlt-7 for correct formation of cross-links in cuticle collagens. Association with the GTPase rho-1 promotes ROS production and this interaction may be modulated by memo-1, in order to control the oxidative stress response and longevity. In Caenorhabditis elegans, this protein is Dual oxidase 1.